A 34-amino-acid chain; its full sequence is Antimicrobial peptide Alo-2 (34 aa).

3 disulfide bridges follow: cysteine 1–cysteine 18, cysteine 8–cysteine 22, and cysteine 17–cysteine 33.

Its subcellular location is the secreted. In terms of biological role, has antifungal activity against C.glabrata. This is Antimicrobial peptide Alo-2 from Acrocinus longimanus (Giant harlequin beetle).